The sequence spans 214 residues: uncharacterized protein (214 aa).

Residues 1-17 (MWCFIVFLTIFLPTLEG) form the signal peptide. N-linked (GlcNAc...) asparagine glycans are attached at residues asparagine 88 and asparagine 139.

As to expression, component of the acid-insoluble organic matrix of calcified layers of the shell (at protein level).

The protein resides in the secreted. This is an uncharacterized protein from Lottia gigantea (Giant owl limpet).